Here is a 117-residue protein sequence, read N- to C-terminus: Probable glycerol dehydratase-reactivating factor small subunit (117 aa).

E31 serves as a coordination point for Mg(2+).

The protein belongs to the DdrB/PduH family. As to quaternary structure, member of the GDR complex, probably composed of DhaF(2)/DhaG(2). Mg(2+) serves as cofactor.

In terms of biological role, small subunit of the glycerol dehydratase-reactivating factor (GDR), which reactivates suicidally inhibited adenosylcobalamin-dependent glycerol dehydratase. The protein is Probable glycerol dehydratase-reactivating factor small subunit of Citrobacter freundii.